The primary structure comprises 554 residues: Neutral amino acid transporter 9 (554 aa).

Topologically, residues 1–112 (MDSDQTPLIN…GSDGSEKNSS (112 aa)) are cytoplasmic. Residues 113–133 (IVTIFMIWNTMMGTSILSIPW) form a helical membrane-spanning segment. The important for arginine binding and amino acid transport stretch occupies residues 122–127 (TMMGTS). Serine 127 contacts arginine. The Lumenal portion of the chain corresponds to 134–139 (GIKQAG). Residues 140–160 (FTTGVCVLFLMGILTLYCCYR) traverse the membrane as a helical segment. Topologically, residues 161–191 (VVKSRGTIPLTDTSTWEFPDVCQYYFGSFGR) are cytoplasmic. A helical membrane pass occupies residues 192–218 (WSSLLFSMVSLIGAMIVYWVLMSNFLF). Residues 219–276 (NTGKFIYNYVNDVNITDDVLSNNGTDKVICPNPDSTGPLNKSMDTYYGNGTNLEHFET) lie on the Lumenal side of the membrane. Residues asparagine 232, asparagine 241, asparagine 258, and asparagine 267 are each glycosylated (N-linked (GlcNAc...) asparagine). Cysteine 248 and cysteine 417 are disulfide-bonded. The helical transmembrane segment at 277-293 (WWSKTNTVPFYLVVLLL) threads the bilayer. The Cytoplasmic segment spans residues 294-302 (PLLGFRSPS). A helical membrane pass occupies residues 303–327 (FFAKFNILGTVSIIYLVSLVTLKAA). The Lumenal portion of the chain corresponds to 328-349 (HLGFHLQFSWNQVQTFFVPEFR). Residues 350–370 (VSFPQLTGILTLAFFIHNCII) form a helical membrane-spanning segment. At 371–387 (TLLKNNRNQKNNVRDLS) the chain is on the cytoplasmic side. The chain crosses the membrane as a helical span at residues 388–408 (IAYLLVGLTYVYVGVVVFASF). Residues 409-430 (PSPPLSKQCIEQNFLDNFPSSD) are Lumenal-facing. The chain crosses the membrane as a helical span at residues 431-451 (ILAFVARIFLLFQMMTVYPLL). Positions 437–447 (RIFLLFQMMTV) match the CARC motif motif. The short motif at 450–456 (LLGYLVR) is the CRAC motif element. At 452–472 (GYLVRVQLLGHIFGDIYPSIF) the chain is on the cytoplasmic side. The helical transmembrane segment at 473–493 (HVLALNIAVVGVGVIMARFYP) threads the bilayer. The Lumenal portion of the chain corresponds to 494–500 (NIGGIIR). The helical transmembrane segment at 501-521 (FSGAACGLAFVFVYPSLIHMI) threads the bilayer. Residues 522-533 (SLHRRGQLRIHS) are Cytoplasmic-facing. Residues 534–554 (ILIHVSIIVLGISNLIAQFFM) form a helical membrane-spanning segment.

It belongs to the amino acid/polyamine transporter 2 family. SLC38A9 subfamily. In terms of assembly, associated component of the Ragulator complex. Associated component of the Rag GTPases heterodimers. Glycosylated.

Its subcellular location is the lysosome membrane. The protein resides in the late endosome membrane. The catalysed reaction is L-leucine(in) = L-leucine(out). It catalyses the reaction L-tyrosine(in) = L-tyrosine(out). It carries out the reaction L-glutamine(out) = L-glutamine(in). The enzyme catalyses L-asparagine(out) = L-asparagine(in). Its function is as follows. Lysosomal amino acid transporter involved in the activation of mTORC1 in response to amino acid levels. Probably acts as an amino acid sensor of the Rag GTPases and Ragulator complexes, 2 complexes involved in amino acid sensing and activation of mTORC1, a signaling complex promoting cell growth in response to growth factors, energy levels, and amino acids. Following activation by amino acids, the Ragulator and Rag GTPases function as a scaffold recruiting mTORC1 to lysosomes where it is in turn activated. SLC38A9 mediates transport of amino acids with low capacity and specificity with a slight preference for polar amino acids. Acts as an arginine sensor. Following activation by arginine binding, mediates transport of L-glutamine, leucine and tyrosine with high efficiency, and is required for the efficient utilization of these amino acids after lysosomal protein degradation. However, the transport mechanism is not well defined and the role of sodium is not clear. Guanine exchange factor (GEF) that, upon arginine binding, stimulates GDP release from RRAGA and therefore activates the Rag GTPase heterodimer and the mTORC1 pathway in response to nutrient sufficiency. This chain is Neutral amino acid transporter 9, found in Xenopus laevis (African clawed frog).